We begin with the raw amino-acid sequence, 432 residues long: Glutamyl-tRNA reductase (432 aa).

Substrate-binding positions include 49 to 52 (TCNR), Ser-107, 112 to 114 (ETQ), and Gln-118. The Nucleophile role is filled by Cys-50. 186–191 (GAGEMG) contacts NADP(+).

It belongs to the glutamyl-tRNA reductase family. In terms of assembly, homodimer.

The enzyme catalyses (S)-4-amino-5-oxopentanoate + tRNA(Glu) + NADP(+) = L-glutamyl-tRNA(Glu) + NADPH + H(+). It functions in the pathway porphyrin-containing compound metabolism; protoporphyrin-IX biosynthesis; 5-aminolevulinate from L-glutamyl-tRNA(Glu): step 1/2. In terms of biological role, catalyzes the NADPH-dependent reduction of glutamyl-tRNA(Glu) to glutamate 1-semialdehyde (GSA). The chain is Glutamyl-tRNA reductase from Campylobacter jejuni subsp. jejuni serotype O:23/36 (strain 81-176).